The primary structure comprises 216 residues: Probable GTP-binding protein EngB (216 aa).

An EngB-type G domain is found at 37–214; it reads GSVEIAFAGR…RAAMIRLLDE (178 aa). Residues 45–52, 72–76, 92–95, 159–162, and 193–195 each bind GTP; these read GRSNVGKS, GRTQE, DMPG, TKAD, and TSS. Residues S52 and T74 each contribute to the Mg(2+) site.

It belongs to the TRAFAC class TrmE-Era-EngA-EngB-Septin-like GTPase superfamily. EngB GTPase family. Mg(2+) is required as a cofactor.

Functionally, necessary for normal cell division and for the maintenance of normal septation. The protein is Probable GTP-binding protein EngB of Rhodopseudomonas palustris (strain ATCC BAA-98 / CGA009).